The following is a 141-amino-acid chain: Translation initiation factor 2 subunit beta (141 aa).

Belongs to the eIF-2-beta/eIF-5 family. Heterotrimer composed of an alpha, a beta and a gamma chain.

In terms of biological role, eIF-2 functions in the early steps of protein synthesis by forming a ternary complex with GTP and initiator tRNA. This is Translation initiation factor 2 subunit beta from Sulfolobus acidocaldarius (strain ATCC 33909 / DSM 639 / JCM 8929 / NBRC 15157 / NCIMB 11770).